The chain runs to 688 residues: Potassium-transporting ATPase ATP-binding subunit (688 aa).

4 helical membrane-spanning segments follow: residues 34-54, 62-82, 219-239, and 260-280; these read PVMF…LAIL, AMFT…ANMA, VALT…TATL, and VLVA…LSAI. Catalysis depends on Asp313, which acts as the 4-aspartylphosphate intermediate. ATP is bound by residues Asp350, Glu354, 383-390, and Lys401; that span reads FSAQTRMS. Positions 524 and 528 each coordinate Mg(2+). A run of 3 helical transmembrane segments spans residues 594 to 614, 622 to 642, and 662 to 682; these read FAII…LNIM, AILS…PLAL, and IYGL…DLLL.

It belongs to the cation transport ATPase (P-type) (TC 3.A.3) family. Type IA subfamily. As to quaternary structure, the system is composed of three essential subunits: KdpA, KdpB and KdpC.

It is found in the cell inner membrane. The enzyme catalyses K(+)(out) + ATP + H2O = K(+)(in) + ADP + phosphate + H(+). Functionally, part of the high-affinity ATP-driven potassium transport (or Kdp) system, which catalyzes the hydrolysis of ATP coupled with the electrogenic transport of potassium into the cytoplasm. This subunit is responsible for energy coupling to the transport system and for the release of the potassium ions to the cytoplasm. The sequence is that of Potassium-transporting ATPase ATP-binding subunit from Yersinia pseudotuberculosis serotype I (strain IP32953).